The primary structure comprises 384 residues: Ribosomal RNA large subunit methyltransferase G (384 aa).

This sequence belongs to the methyltransferase superfamily. RlmG family.

Its subcellular location is the cytoplasm. The catalysed reaction is guanosine(1835) in 23S rRNA + S-adenosyl-L-methionine = N(2)-methylguanosine(1835) in 23S rRNA + S-adenosyl-L-homocysteine + H(+). Functionally, specifically methylates the guanine in position 1835 (m2G1835) of 23S rRNA. This Streptomyces griseus subsp. griseus (strain JCM 4626 / CBS 651.72 / NBRC 13350 / KCC S-0626 / ISP 5235) protein is Ribosomal RNA large subunit methyltransferase G.